We begin with the raw amino-acid sequence, 321 residues long: Ribose import permease protein RbsC (321 aa).

Over 1–22 (MTTQTVSGRRYFTKAWLMEQKS) the chain is Cytoplasmic. Residues 23–43 (LIALLVLIAIVSTLSPNFFTI) traverse the membrane as a helical segment. Topologically, residues 44-56 (NNLFNILQQTSVN) are periplasmic. Residues 57–77 (AIMAVGMTLVILTSGIDLSVG) traverse the membrane as a helical segment. Residues 78–125 (SLLALTGAVAASIVGIEVNALVAVAAALALGAAIGAVTGVIVAKGRVQ) are Cytoplasmic-facing. A helical membrane pass occupies residues 126-145 (AFIATLVMMLLLRGVTMVYT). The Periplasmic segment spans residues 146–168 (NGSPVNTGFTENADLFGWFGIGR). The helical transmembrane segment at 169-190 (PLGVPTPVWIMGIVFLAAWYML) threads the bilayer. Residues 191-220 (HHTRLGRYIYALGGNEAATRLSGINVNKIK) are Cytoplasmic-facing. The helical transmembrane segment at 221-240 (IIVYSLCGLLASLAGIIEVA) threads the bilayer. Topologically, residues 241–294 (RLSSAQPTAGTGYELDAIAAVVLGGTSLAGGKGRIVGTLIGALILGFLNNGLNL) are periplasmic. A helical membrane pass occupies residues 295–316 (LGVSSYYQMIVKAVVILLAVLV). Residues 317–321 (DNKKQ) lie on the Cytoplasmic side of the membrane.

The protein belongs to the binding-protein-dependent transport system permease family. AraH/RbsC subfamily. The complex is composed of an ATP-binding protein (RbsA), two transmembrane proteins (RbsC) and a solute-binding protein (RbsB).

Its subcellular location is the cell inner membrane. In terms of biological role, part of the ABC transporter complex RbsABC involved in ribose import. Probably responsible for the translocation of the substrate across the membrane. In Escherichia coli O157:H7, this protein is Ribose import permease protein RbsC (rbsC).